We begin with the raw amino-acid sequence, 213 residues long: 3-isopropylmalate dehydratase small subunit (213 aa).

The protein belongs to the LeuD family. LeuD type 1 subfamily. As to quaternary structure, heterodimer of LeuC and LeuD.

It catalyses the reaction (2R,3S)-3-isopropylmalate = (2S)-2-isopropylmalate. It functions in the pathway amino-acid biosynthesis; L-leucine biosynthesis; L-leucine from 3-methyl-2-oxobutanoate: step 2/4. Functionally, catalyzes the isomerization between 2-isopropylmalate and 3-isopropylmalate, via the formation of 2-isopropylmaleate. In Magnetococcus marinus (strain ATCC BAA-1437 / JCM 17883 / MC-1), this protein is 3-isopropylmalate dehydratase small subunit.